The chain runs to 253 residues: uncharacterized protein (253 aa).

An N-terminal signal peptide occupies residues 1 to 19 (MRYLKKVTIYISLLILVSG). C20 carries N-palmitoyl cysteine lipidation. C20 carries S-diacylglycerol cysteine lipidation.

It belongs to the staphylococcal tandem lipoprotein family.

The protein localises to the cell membrane. This is an uncharacterized protein from Staphylococcus epidermidis (strain ATCC 35984 / DSM 28319 / BCRC 17069 / CCUG 31568 / BM 3577 / RP62A).